Consider the following 166-residue polypeptide: Large ribosomal subunit protein uL10 (166 aa).

It belongs to the universal ribosomal protein uL10 family. Part of the ribosomal stalk of the 50S ribosomal subunit. The N-terminus interacts with L11 and the large rRNA to form the base of the stalk. The C-terminus forms an elongated spine to which L12 dimers bind in a sequential fashion forming a multimeric L10(L12)X complex.

Forms part of the ribosomal stalk, playing a central role in the interaction of the ribosome with GTP-bound translation factors. This Oceanobacillus iheyensis (strain DSM 14371 / CIP 107618 / JCM 11309 / KCTC 3954 / HTE831) protein is Large ribosomal subunit protein uL10.